We begin with the raw amino-acid sequence, 254 residues long: Trans-aconitate 2-methyltransferase (254 aa).

Belongs to the methyltransferase superfamily. Tam family.

The protein localises to the cytoplasm. It carries out the reaction trans-aconitate + S-adenosyl-L-methionine = (E)-3-(methoxycarbonyl)pent-2-enedioate + S-adenosyl-L-homocysteine. In terms of biological role, catalyzes the S-adenosylmethionine monomethyl esterification of trans-aconitate. This Mycobacterium sp. (strain JLS) protein is Trans-aconitate 2-methyltransferase.